We begin with the raw amino-acid sequence, 469 residues long: Programmed cell death protein 4 (469 aa).

Position 1 is an N-acetylmethionine (Met-1). Disordered stretches follow at residues Met-1 to Asn-30 and Lys-58 to Gly-128. Residues Gln-7–Leu-23 show a composition bias toward polar residues. A Phosphoserine modification is found at Ser-25. The Nuclear localization signal signature appears at Lys-58–Arg-64. Ser-67 carries the post-translational modification Phosphoserine; by PKB and RPS6KB1. 5 positions are modified to phosphoserine: Ser-68, Ser-71, Ser-76, Ser-78, and Ser-94. A Phosphodegron motif is present at residues Asp-70 to Ser-76. Residues Lys-114–Gly-125 are compositionally biased toward gly residues. Tyr-152 carries the phosphotyrosine modification. Residues Ala-163–Gly-284 enclose the MI 1 domain. A phosphoserine mark is found at Ser-313 and Ser-317. One can recognise an MI 2 domain in the interval His-326–Ser-449. The Nuclear localization signal signature appears at Pro-448–Arg-454. Phosphoserine is present on Ser-457.

The protein belongs to the PDCD4 family. Interacts (via MI domains) with EIF4A2. Interacts (via MI domains) with EIF4A1 (via N-terminal domain). Heterotrimer with EIF4A1; one molecule of PDCD4 binds two molecules of EIF4A1. Interacts with EIF4G1. May form a complex with EIF4A1 and EIF4G1. The interaction between PDCD4 and EIF4A1 interferes with the interaction between EIF4A1 and EIF4G. When phosphorylated, interacts with BTRC and FBXW11. In terms of processing, polyubiquitinated, leading to its proteasomal degradation. Rapidly degraded in response to mitogens. Phosphorylation of the phosphodegron promotes interaction with BTRC and proteasomal degradation. Post-translationally, phosphorylated at Ser-67 by RPS6KB1 in response to mitogens; phosphorylation promotes proteasomal degradation of PDCD4.

The protein resides in the nucleus. Its subcellular location is the cytoplasm. Inhibits translation initiation and cap-dependent translation. May excert its function by hindering the interaction between EIF4A1 and EIF4G. Inhibits the helicase activity of EIF4A. Modulates the activation of JUN kinase. Down-regulates the expression of MAP4K1, thus inhibiting events important in driving invasion, namely, MAPK85 activation and consequent JUN-dependent transcription. May play a role in apoptosis. Tumor suppressor. Inhibits tumor promoter-induced neoplastic transformation. Binds RNA. This is Programmed cell death protein 4 (Pdcd4) from Rattus norvegicus (Rat).